A 381-amino-acid polypeptide reads, in one-letter code: Chaperone protein DnaJ (381 aa).

The region spanning D4–G69 is the J domain. Residues G135–N213 form a CR-type zinc finger. Residues C148, C151, C165, C168, C187, C190, C201, and C204 each coordinate Zn(2+). CXXCXGXG motif repeat units lie at residues C148–G155, C165–G172, C187–G194, and C201–R208.

The protein belongs to the DnaJ family. In terms of assembly, homodimer. Zn(2+) is required as a cofactor.

The protein resides in the cytoplasm. Participates actively in the response to hyperosmotic and heat shock by preventing the aggregation of stress-denatured proteins and by disaggregating proteins, also in an autonomous, DnaK-independent fashion. Unfolded proteins bind initially to DnaJ; upon interaction with the DnaJ-bound protein, DnaK hydrolyzes its bound ATP, resulting in the formation of a stable complex. GrpE releases ADP from DnaK; ATP binding to DnaK triggers the release of the substrate protein, thus completing the reaction cycle. Several rounds of ATP-dependent interactions between DnaJ, DnaK and GrpE are required for fully efficient folding. Also involved, together with DnaK and GrpE, in the DNA replication of plasmids through activation of initiation proteins. This chain is Chaperone protein DnaJ, found in Bartonella henselae (strain ATCC 49882 / DSM 28221 / CCUG 30454 / Houston 1) (Rochalimaea henselae).